Here is a 155-residue protein sequence, read N- to C-terminus: uncharacterized protein (155 aa).

The interval 1–34 is disordered; the sequence is MESLQTPQHRENQDKREKEYGVKHMPMGNNAGNL. A compositionally biased stretch (basic and acidic residues) spans 8–22; that stretch reads QHRENQDKREKEYGV. Residues 115-135 form a helical membrane-spanning segment; sequence MSLLLLPAFSGLTWAPFLFLF.

It is found in the membrane. This is an uncharacterized protein from Homo sapiens (Human).